The primary structure comprises 275 residues: Large ribosomal subunit protein uL2c (275 aa).

Disordered stretches follow at residues 32-53 (SLSK…TCRH) and 218-242 (PTVR…APIG).

This sequence belongs to the universal ribosomal protein uL2 family. In terms of assembly, part of the 50S ribosomal subunit.

It localises to the plastid. It is found in the chloroplast. The sequence is that of Large ribosomal subunit protein uL2c (rpl2) from Tetradesmus obliquus (Green alga).